Here is a 192-residue protein sequence, read N- to C-terminus: MLKKSLAALALGTALLSAGQAMAADYVIDKEGQHAFVDFKISHLGYSFIHGTFKDWDGTFSFDAAKPEASKINVELKTASLFTNHAERDKHISSKDFLDVAKYPEAKFVSTAVKSTGEKTADVTGDLTLHGVTKPIVIKATFNGEGKDPWGGYRAGFNGTSTLNLNDFGIKGPGPTSQTLDLDISFEGVQKK.

A signal peptide spans 1–23; sequence MLKKSLAALALGTALLSAGQAMA.

It belongs to the UPF0312 family. Type 1 subfamily.

It localises to the periplasm. The sequence is that of UPF0312 protein Psyr_0457 from Pseudomonas syringae pv. syringae (strain B728a).